Reading from the N-terminus, the 239-residue chain is Carboxy-S-adenosyl-L-methionine synthase (239 aa).

S-adenosyl-L-methionine-binding positions include Tyr-36, Gly-61 to Ser-63, Asp-111 to Ile-112, Asn-126, and Arg-193.

The protein belongs to the class I-like SAM-binding methyltransferase superfamily. Cx-SAM synthase family. Homodimer.

The catalysed reaction is prephenate + S-adenosyl-L-methionine = carboxy-S-adenosyl-L-methionine + 3-phenylpyruvate + H2O. Functionally, catalyzes the conversion of S-adenosyl-L-methionine (SAM) to carboxy-S-adenosyl-L-methionine (Cx-SAM). This chain is Carboxy-S-adenosyl-L-methionine synthase, found in Nitratiruptor sp. (strain SB155-2).